The following is a 358-amino-acid chain: Myb family transcription factor APL (358 aa).

Residues 31–91 (TDPKPRLRWT…HLQKFRLGKQ (61 aa)) enclose the HTH myb-type domain. A DNA-binding region (H-T-H motif) is located at residues 62-87 (PKTIMRVMGVKGLTLYHLKSHLQKFR). Residues 125-145 (RNMNEMQMEVQRRLHEQLEVQ) adopt a coiled-coil conformation. Positions 138–143 (LHEQLE) match the LHEQLE motif. The tract at residues 313-358 (RKSGLSGDEGNNGGKLLERPSPRRSPLSPMMNPNGGLIQGRNSPFG) is disordered.

It belongs to the MYB-CC family. In terms of tissue distribution, expressed in shoots and roots, specifically in the developing protophloem sieve elements. Detected in phloem and/or cambium. Expressed in the phloem tissues of various organs, including leaves and cotyledons, during vegetative growth.

The protein resides in the nucleus. Transcription factor required for phloem identity. Has a dual role both in promoting phloem differentiation and in repressing xylem differentiation during vascular development. Regulates the expression of the transcription factor NAC045 (AC A4VCM0). May activate the transcription of specific genes involved in phosphate uptake or assimilation. Promotes flowering through transcriptional activation of both FT and its transport machinery component, FTIP1. The polypeptide is Myb family transcription factor APL (Arabidopsis thaliana (Mouse-ear cress)).